The following is an 816-amino-acid chain: Cation/H(+) antiporter 8 (816 aa).

12 helical membrane passes run 64–84 (PKLE…NILF), 97–117 (MMLA…NSII), 127–147 (IDVA…LKGV), 163–183 (VTGV…FNLK), 197–214 (VMLL…ARLL), 227–247 (VALS…IANV), 255–275 (ADGL…FAVV), 297–317 (IHGV…LSQF), 343–363 (LESF…MLRT), 382–402 (FAVA…SVIV), 413–433 (SIIL…FYLF), and 447–467 (ILVL…GFLY).

This sequence belongs to the monovalent cation:proton antiporter 2 (CPA2) transporter (TC 2.A.37) family. CHX (TC 2.A.37.4) subfamily. In terms of tissue distribution, specifically expressed in pollen.

Its subcellular location is the membrane. In terms of biological role, may operate as a cation/H(+) antiporter. This chain is Cation/H(+) antiporter 8 (CHX8), found in Arabidopsis thaliana (Mouse-ear cress).